The chain runs to 36 residues: Peruvianin-1 (36 aa).

The protein belongs to the germin family. Homohexamer, possibly consisting of a trimer of dimers. Glycosylated.

With respect to regulation, inhibited by iodoacetamide and trans-epoxysuccinyl-L-leucylamido(4-guanidino)butane (E-64) but not by phenylmethylsulfonyl fluoride (PMSF), pepstatin-A, ethylenediamine tetra acetic acid (EDTA) or ethylene glycol tetraacetic acid (EGTA). In terms of biological role, cysteine protease able to degrade azocasein and benzoyl-arginine-beta-naphtylamide (BANA) in vitro. The sequence is that of Peruvianin-1 from Thevetia peruviana (Yellow oleander).